The primary structure comprises 810 residues: MSEPTADAGDNSPSSTDTAPLDRVKAIALLPLRSYLVKFAVALLVILVIIAAGGFWVQADATATLEANTEQQLEQEAVSDATEIGDWLERNEQSVLIASNNPRLGFNTTAADKQAYVTQLVAAELDADRIADVHVADPTVGGASDARIVASTDEDARGTRVSADTHPWVDRTRSIGRDTVVSTNPYRTAGGQRVVSSMSVAADLTHVLVVEYTAGDLSDQFGAGIDGTFTQVVRPTSDATAVLFSDAGTDAVGQPYIPDRSQSEIPALDSATEQGQFTNTPTKDSVLDREYVAAYTTVPGKNWVVVKHAPSESAFALSNQIRTGILGFILVALVGVVLVGGTIGRNTAAAVQSLSAAAAEIEAGNYDVDVASSRRDEIGQLFASIGSMRDALVTQIDEAEAAREQATEAQQDAEAERERAEDARERAEDAKADAEALAAELEAQAERYSDVMAACADGDLTRRMPADDTDNEAMAAIAASFNEMLAQWEHTIIDIQEFADAVATASEEAEVGAADAERASGQVSESVQEIAGAADEQRNMLDTVSGEMTDLSAAIEEVAASADSVAEHSHQTAEIARDGEQTAEDAIERSLTVQEAIDATVQNVEALDDQMAEISEIVDLISDIAEQTNMLALNANIEAARADKSGDGFAVVADEVKDLAEETQESAGDIERRITEVQSQTTATVAEARAAEESMDAGIDAVEEVVDAFTAVSDHADETDTGVQEISDTTDDQAASTEEAVSMTEEVADLSDSTAGEAQSVSAAAEEQAASMSEISDSVESLSGQAEQLKALLSEFEVDADRDVTPTQTD.

Over 1-38 (MSEPTADAGDNSPSSTDTAPLDRVKAIALLPLRSYLVK) the chain is Cytoplasmic. Residues 39–59 (FAVALLVILVIIAAGGFWVQA) form a helical membrane-spanning segment. At 60-323 (DATATLEANT…AFALSNQIRT (264 aa)) the chain is on the extracellular side. Residues 324–344 (GILGFILVALVGVVLVGGTIG) form a helical membrane-spanning segment. The region spanning 345–397 (RNTAAAVQSLSAAAAEIEAGNYDVDVASSRRDEIGQLFASIGSMRDALVTQID) is the HAMP 1 domain. Over 345–810 (RNTAAAVQSL…DRDVTPTQTD (466 aa)) the chain is Cytoplasmic. The segment at 403–427 (REQATEAQQDAEAERERAEDARERA) is disordered. The segment covering 414 to 427 (EAERERAEDARERA) has biased composition (basic and acidic residues). In terms of domain architecture, HAMP 2 spans 439–493 (AELEAQAERYSDVMAACADGDLTRRMPADDTDNEAMAAIAASFNEMLAQWEHTII). Residues 512–748 (GAADAERASG…EAVSMTEEVA (237 aa)) form the Methyl-accepting transducer domain. A glutamate methyl ester (Glu) mark is found at E556 and E739. Residues 751-784 (SDSTAGEAQSVSAAAEEQAASMSEISDSVESLSG) are disordered. Over residues 755–774 (AGEAQSVSAAAEEQAASMSE) the composition is skewed to low complexity. Residues 775-784 (ISDSVESLSG) show a composition bias toward polar residues.

The protein belongs to the methyl-accepting chemotaxis (MCP) protein family. In terms of processing, methylated by CheR.

Its subcellular location is the cell membrane. Its function is as follows. Mediates chemotaxis towards compatible osmolytes. Probably transduces the signal from the substrate-binding protein CosB to the histidine kinase CheA. The sequence is that of Transducer protein CosT (cosT) from Halobacterium salinarum (strain ATCC 700922 / JCM 11081 / NRC-1) (Halobacterium halobium).